A 466-amino-acid chain; its full sequence is ATP synthase subunit beta (466 aa).

153-160 contacts ATP; sequence GGAGVGKT.

Belongs to the ATPase alpha/beta chains family. In terms of assembly, F-type ATPases have 2 components, CF(1) - the catalytic core - and CF(0) - the membrane proton channel. CF(1) has five subunits: alpha(3), beta(3), gamma(1), delta(1), epsilon(1). CF(0) has three main subunits: a(1), b(2) and c(9-12). The alpha and beta chains form an alternating ring which encloses part of the gamma chain. CF(1) is attached to CF(0) by a central stalk formed by the gamma and epsilon chains, while a peripheral stalk is formed by the delta and b chains.

The protein localises to the cell membrane. The catalysed reaction is ATP + H2O + 4 H(+)(in) = ADP + phosphate + 5 H(+)(out). Its function is as follows. Produces ATP from ADP in the presence of a proton gradient across the membrane. The catalytic sites are hosted primarily by the beta subunits. This Leuconostoc citreum (strain KM20) protein is ATP synthase subunit beta.